Here is a 408-residue protein sequence, read N- to C-terminus: Sprouty-related, EVH1 domain-containing protein 3 (408 aa).

Residues 1-113 (MVRVRAVVMA…KSLLAALAAL (113 aa)) enclose the WH1 domain. Residues 118-226 (LTPSSSSSSS…YEDYRRSGPP (109 aa)) are disordered. Over residues 120-130 (PSSSSSSSSPS) the composition is skewed to low complexity. One can recognise a KBD domain in the interval 192–242 (LPFTGIPEPSESLAGAGSQGWGSRGYEDYRRSGPPPPPLALSTCVVRFAKT). Arginine 238 bears the Asymmetric dimethylarginine mark. An Omega-N-methylarginine modification is found at arginine 246. The disordered stretch occupies residues 256-286 (LPAPLTEAAPPAPPARPPPGPGPTPAPAKAS). The span at 265 to 281 (PPAPPARPPPGPGPTPA) shows a compositional bias: pro residues. Residues 294–405 (RCVHCRALFR…CAGCGGRHEE (112 aa)) enclose the SPR domain.

As to quaternary structure, interacts with palmitoyltransferase ZDHHC17/HIP14; the interaction leads to palmitoylation of SPRED3. Phosphorylated on tyrosine. In terms of processing, palmitoylated by ZDHHC17/HIP14. Post-translationally, ubiquitinated. As to expression, brain specific.

Its subcellular location is the cell membrane. Functionally, tyrosine kinase substrate that inhibits growth-factor-mediated activation of MAP kinase. Inhibits fibroblast growth factor (FGF)-induced retinal lens fiber differentiation, probably by inhibiting FGF-mediated phosphorylation of ERK1/2. Inhibits TGFB-induced epithelial-to-mesenchymal transition in lens epithelial cells. The protein is Sprouty-related, EVH1 domain-containing protein 3 (Spred3) of Mus musculus (Mouse).